We begin with the raw amino-acid sequence, 141 residues long: Hemoglobin subunit alpha-A (141 aa).

The 141-residue stretch at 1 to 141 folds into the Globin domain; the sequence is VLSANDKTNV…VGNVLSAKYR (141 aa). H58 lines the O2 pocket. A heme b-binding site is contributed by H87.

Belongs to the globin family. Heterotetramer of two alpha chains and two beta chains. As to expression, red blood cells.

Its function is as follows. Involved in oxygen transport from the lung to the various peripheral tissues. The chain is Hemoglobin subunit alpha-A (HBAA) from Trigonoceps occipitalis (White-headed vulture).